The sequence spans 383 residues: Deoxyguanosinetriphosphate triphosphohydrolase-like protein (383 aa).

The HD domain occupies 62–198 (RLTHSLEVST…AALADDISYI (137 aa)).

It belongs to the dGTPase family. Type 2 subfamily.

The chain is Deoxyguanosinetriphosphate triphosphohydrolase-like protein from Rickettsia bellii (strain RML369-C).